The sequence spans 230 residues: MEDKLDRYYTNVLSNAEKDKHTTVDSDDKSSGEENLDELLNELDRELDEDHEFLSAYRSERLQQISDHLKQVKKNVEDDGYGRLQCIDNEADAIQICTKTTMVVIHFELETFGKCQYMNEKLENLAKRYLTTRFIKVNVQTCPFLVNKLNIKVLPFVVGYKNGLEKVRYVGFSKLGNDPNGFDIRRLEQSLAHSGVIEDTFEIRKHSSVNTERFASTNHDRSESDSDLDI.

Methionine 1 bears the N-acetylmethionine mark. Residues 16–166 (AEKDKHTTVD…VVGYKNGLEK (151 aa)) enclose the Phosducin domain. Positions 25 to 79 (DSDDKSSGEENLDELLNELDRELDEDHEFLSAYRSERLQQISDHLKQVKKNVEDD) form a coiled coil. Residues 81–230 (YGRLQCIDNE…RSESDSDLDI (150 aa)) form a thioredoxin fold region.

Belongs to the phosducin family. As to quaternary structure, interacts with the G protein beta-gamma subunit complex (STE4-STE18 complex).

It is found in the cytoplasm. Its function is as follows. Not essential for growth. Inhibits early G-protein signaling events following pheromone stimulation. May help create heterodimerizable beta-tubulin by facilitating the efficient transfer of nascent beta-tubulin polypeptides to the folding apparatus. The chain is Phosducin-like protein 1 (PLP1) from Saccharomyces cerevisiae (strain ATCC 204508 / S288c) (Baker's yeast).